Reading from the N-terminus, the 334-residue chain is Ferredoxin--NADP reductase (334 aa).

The FAD site is built by Asp33, Gln41, Tyr46, Ala86, Phe120, Asp286, and Thr327.

This sequence belongs to the ferredoxin--NADP reductase type 2 family. In terms of assembly, homodimer. FAD serves as cofactor.

It catalyses the reaction 2 reduced [2Fe-2S]-[ferredoxin] + NADP(+) + H(+) = 2 oxidized [2Fe-2S]-[ferredoxin] + NADPH. This is Ferredoxin--NADP reductase from Rickettsia prowazekii (strain Madrid E).